A 610-amino-acid polypeptide reads, in one-letter code: UvrABC system protein C (610 aa).

The GIY-YIG domain maps to 13–91 (HLPGVYRMYD…IKENQPKYNV (79 aa)). The region spanning 201-236 (GQVVEHLVQKMENAAQELDFEAAARFRDQIQSVRAV) is the UVR domain.

Belongs to the UvrC family. Interacts with UvrB in an incision complex.

Its subcellular location is the cytoplasm. The UvrABC repair system catalyzes the recognition and processing of DNA lesions. UvrC both incises the 5' and 3' sides of the lesion. The N-terminal half is responsible for the 3' incision and the C-terminal half is responsible for the 5' incision. This Actinobacillus pleuropneumoniae serotype 5b (strain L20) protein is UvrABC system protein C.